We begin with the raw amino-acid sequence, 380 residues long: Cytochrome b (380 aa).

The next 4 membrane-spanning stretches (helical) occupy residues 34–54 (FGSLLGICLMTQILTGLLLAM), 78–99 (WLIRNLHANGASFFFICIYFHI), 114–134 (WNTGVILLLTLMATAFVGYVL), and 179–199 (FFALHFLLPFMIAGLTLIHLT). Heme b contacts are provided by H84 and H98. Positions 183 and 197 each coordinate heme b. H202 provides a ligand contact to a ubiquinone. Transmembrane regions (helical) follow at residues 227-247 (LKDILGFTLMFLPLTTLALFS), 289-309 (LGGVLALAASVLILFLIPFLH), 321-341 (ISQLLFWILVANLLILTWVGS), and 348-368 (FIIIGQLASVTYFTILLVLFP).

It belongs to the cytochrome b family. The cytochrome bc1 complex contains 11 subunits: 3 respiratory subunits (MT-CYB, CYC1 and UQCRFS1), 2 core proteins (UQCRC1 and UQCRC2) and 6 low-molecular weight proteins (UQCRH/QCR6, UQCRB/QCR7, UQCRQ/QCR8, UQCR10/QCR9, UQCR11/QCR10 and a cleavage product of UQCRFS1). This cytochrome bc1 complex then forms a dimer. The cofactor is heme b.

It localises to the mitochondrion inner membrane. Functionally, component of the ubiquinol-cytochrome c reductase complex (complex III or cytochrome b-c1 complex) that is part of the mitochondrial respiratory chain. The b-c1 complex mediates electron transfer from ubiquinol to cytochrome c. Contributes to the generation of a proton gradient across the mitochondrial membrane that is then used for ATP synthesis. The sequence is that of Cytochrome b (MT-CYB) from Pachyptila salvini (Salvin's prion).